The following is a 120-amino-acid chain: Large ribosomal subunit protein bL19 (120 aa).

This sequence belongs to the bacterial ribosomal protein bL19 family.

Functionally, this protein is located at the 30S-50S ribosomal subunit interface and may play a role in the structure and function of the aminoacyl-tRNA binding site. This chain is Large ribosomal subunit protein bL19, found in Rippkaea orientalis (strain PCC 8801 / RF-1) (Cyanothece sp. (strain PCC 8801)).